The following is a 77-amino-acid chain: Small ribosomal subunit protein bS18 (77 aa).

This sequence belongs to the bacterial ribosomal protein bS18 family. As to quaternary structure, part of the 30S ribosomal subunit. Forms a tight heterodimer with protein bS6.

In terms of biological role, binds as a heterodimer with protein bS6 to the central domain of the 16S rRNA, where it helps stabilize the platform of the 30S subunit. This is Small ribosomal subunit protein bS18 from Desulforamulus reducens (strain ATCC BAA-1160 / DSM 100696 / MI-1) (Desulfotomaculum reducens).